The primary structure comprises 215 residues: Thiamine import ATP-binding protein ThiQ (215 aa).

The region spanning 2 to 215 (IYLNNVILND…GQISQLQKGV (214 aa)) is the ABC transporter domain. 32–39 (GESGAGKS) is an ATP binding site.

Belongs to the ABC transporter superfamily. Thiamine importer (TC 3.A.1.19.1) family. As to quaternary structure, the complex is composed of two ATP-binding proteins (ThiQ), two transmembrane proteins (ThiP) and a solute-binding protein (ThiB).

The protein localises to the cell inner membrane. It carries out the reaction thiamine(out) + ATP + H2O = thiamine(in) + ADP + phosphate + H(+). Functionally, part of the ABC transporter complex ThiBPQ involved in thiamine import. Responsible for energy coupling to the transport system. The sequence is that of Thiamine import ATP-binding protein ThiQ from Haemophilus influenzae (strain 86-028NP).